Reading from the N-terminus, the 332-residue chain is Ribosomal RNA small subunit methyltransferase C (332 aa).

It belongs to the methyltransferase superfamily. RsmC family. Monomer.

The protein localises to the cytoplasm. It carries out the reaction guanosine(1207) in 16S rRNA + S-adenosyl-L-methionine = N(2)-methylguanosine(1207) in 16S rRNA + S-adenosyl-L-homocysteine + H(+). Specifically methylates the guanine in position 1207 of 16S rRNA in the 30S particle. In Pseudomonas putida (strain ATCC 47054 / DSM 6125 / CFBP 8728 / NCIMB 11950 / KT2440), this protein is Ribosomal RNA small subunit methyltransferase C.